The sequence spans 1043 residues: RNA-directed RNA polymerase (1043 aa).

The chain crosses the membrane as a helical span at residues 26–42; that stretch reads VPLAKSLALVAGSCVVY. The segment at 43-1043 is cytoplasmic; it reads KIIVHRRTLV…GPAGSRGRGK (1001 aa). The interval 105 to 291 is capping; it reads NGHPISGGTR…LVWCLPVASY (187 aa). The RdRp catalytic domain maps to 588–713; that stretch reads EEPSEGDFSN…ERRFAKNYAK (126 aa). D699 (for RdRp/TNTase activity) is an active-site residue. Disordered regions lie at residues 879–902 and 918–1043; these read NRDNEPNPYKDTLDLEGPADGRVD and NQVT…GRGK. 2 stretches are compositionally biased toward low complexity: residues 922–934 and 1032–1043; these read SSQAGAAGSGDAS and SRGPAGSRGRGK.

Belongs to the nodaviridae RNA polymerase family. Homododecamer. Forms 2 stacked rings of 35-nm in diameter, arranged in a crown-like structure at the opening of virus-induced replication vesicles. Interacts with protein B2. The cofactor is Mn(2+).

Its subcellular location is the host mitochondrion outer membrane. It catalyses the reaction RNA(n) + a ribonucleoside 5'-triphosphate = RNA(n+1) + diphosphate. Functionally, RNA-dependent RNA polymerase, which replicates the viral genome composed of 2 RNA segments, RNA1 and RNA2. Does not need an exogenous primer. Also possesses a terminal nucleotidyl transferase (TNTase) activity. The TNTase catalyzes the addition of nucleotide to the 3'-end of plus- and minus-stranded RNAs, probably to repair the 3'-end nucleotide loss. Forms the open necked connection to the cytosol of the virus-induced replication vesicles. Mediates viral RNA1 recruitment. The protein is RNA-directed RNA polymerase of Nodamura virus (strain Mag115) (NoV).